Here is a 276-residue protein sequence, read N- to C-terminus: uncharacterized protein (276 aa).

In terms of domain architecture, AB hydrolase-1 spans 20–137 (PVLIFIPGAN…PPINTFLPDS (118 aa)). A disordered region spans residues 57-76 (GESELTEPLPDSASNPDSDY).

It belongs to the AB hydrolase superfamily.

This is an uncharacterized protein from Staphylococcus aureus (strain USA300).